A 132-amino-acid chain; its full sequence is Small ribosomal subunit protein uS8 (132 aa).

It belongs to the universal ribosomal protein uS8 family. In terms of assembly, part of the 30S ribosomal subunit. Contacts proteins S5 and S12.

Its function is as follows. One of the primary rRNA binding proteins, it binds directly to 16S rRNA central domain where it helps coordinate assembly of the platform of the 30S subunit. The chain is Small ribosomal subunit protein uS8 from Mycoplasmopsis pulmonis (strain UAB CTIP) (Mycoplasma pulmonis).